Consider the following 130-residue polypeptide: Small ribosomal subunit protein uS9 (130 aa).

Residues 106–130 (RDSRKVERKKPGLKKARKASQFSKR) are disordered. Residues 111-130 (VERKKPGLKKARKASQFSKR) show a composition bias toward basic residues.

This sequence belongs to the universal ribosomal protein uS9 family.

This chain is Small ribosomal subunit protein uS9, found in Streptococcus pneumoniae serotype 2 (strain D39 / NCTC 7466).